A 370-amino-acid chain; its full sequence is Queuine tRNA-ribosyltransferase (370 aa).

Catalysis depends on Asp89, which acts as the Proton acceptor. Substrate-binding positions include 89–93 (DSGGF), Asp143, Gln187, and Gly214. The tract at residues 245-251 (GVGKPED) is RNA binding. Asp264 serves as the catalytic Nucleophile. Residues 269 to 273 (TRNAR) form an RNA binding; important for wobble base 34 recognition region. Residues Cys302, Cys304, Cys307, and His333 each coordinate Zn(2+).

This sequence belongs to the queuine tRNA-ribosyltransferase family. Homodimer. Within each dimer, one monomer is responsible for RNA recognition and catalysis, while the other monomer binds to the replacement base PreQ1. Requires Zn(2+) as cofactor.

The catalysed reaction is 7-aminomethyl-7-carbaguanine + guanosine(34) in tRNA = 7-aminomethyl-7-carbaguanosine(34) in tRNA + guanine. It participates in tRNA modification; tRNA-queuosine biosynthesis. In terms of biological role, catalyzes the base-exchange of a guanine (G) residue with the queuine precursor 7-aminomethyl-7-deazaguanine (PreQ1) at position 34 (anticodon wobble position) in tRNAs with GU(N) anticodons (tRNA-Asp, -Asn, -His and -Tyr). Catalysis occurs through a double-displacement mechanism. The nucleophile active site attacks the C1' of nucleotide 34 to detach the guanine base from the RNA, forming a covalent enzyme-RNA intermediate. The proton acceptor active site deprotonates the incoming PreQ1, allowing a nucleophilic attack on the C1' of the ribose to form the product. After dissociation, two additional enzymatic reactions on the tRNA convert PreQ1 to queuine (Q), resulting in the hypermodified nucleoside queuosine (7-(((4,5-cis-dihydroxy-2-cyclopenten-1-yl)amino)methyl)-7-deazaguanosine). The polypeptide is Queuine tRNA-ribosyltransferase (Baumannia cicadellinicola subsp. Homalodisca coagulata).